The following is a 230-amino-acid chain: Inactive 2-(S)-hydroxypropyl-CoM dehydrogenase 2 (230 aa).

This sequence belongs to the short-chain dehydrogenases/reductases (SDR) family.

This is Inactive 2-(S)-hydroxypropyl-CoM dehydrogenase 2 from Xanthobacter autotrophicus (strain ATCC BAA-1158 / Py2).